Here is an 85-residue protein sequence, read N- to C-terminus: ATP synthase subunit 9, mitochondrial (85 aa).

Helical transmembrane passes span 19 to 39 and 61 to 81; these read IGAG…GNVF and ILGF…AFLI.

The protein belongs to the ATPase C chain family. In terms of assembly, F-type ATPases have 2 components, CF(1) - the catalytic core - and CF(0) - the membrane proton channel. CF(1) has five subunits: alpha(3), beta(3), gamma(1), delta(1), epsilon(1). CF(0) has three main subunits: a, b and c.

The protein resides in the mitochondrion membrane. Functionally, this protein is one of the chains of the nonenzymatic membrane component (F0) of mitochondrial ATPase. The protein is ATP synthase subunit 9, mitochondrial (ATP9) of Arabidopsis thaliana (Mouse-ear cress).